A 545-amino-acid chain; its full sequence is MTKKLSLELRQTRKPIQTACGFCHEKHLQCDVGRPCQNCRKRNIASFCRDKVKRRRKRKRSDASNFDKDEAATQTLNFNTVNPGEGSSSAMTQDEKNTGTTTATTTRTTTNFRSESKASSSTENISRAMKDPADTIIANSLLDKPTIGDTDDTGWGFGSIWTNDEYMTLNDLTSFASESMPNQLGPIEEQRSPRRTLGEPLARRYDSSQPFQYLNFGSKLHKTDSRPYISLEQPGNVPSIPAFTMNKGSNDEDASPQQKESQQMQLWQQQASQLQQQASQLQQQASQLQQQRTQQNEPVSEWTPFQLRLLIKTPKDLFDKKNLVKPHNYRKAYKDLLECLHKMFLGSYYRRQNGRWRPVSDDEDQMRRRLMRKEQLQHIAKSIGELYMPKFVALTSNMIEEDLLLQELVLQRSLLELENMSKLVNCTPICIWRRSGEICFVSNEFCSLTGFYKREILDQRRFIVEFMDHQSVVSYYDLFHEHLAFGPKDSTRTILNKDQAVYTECNLLLNNGSYLKCACCLTARRDAFNISLLLMGQFLPIFDVQ.

A DNA-binding region (zn(2)-C6 fungal-type) is located at residues 20-48; that stretch reads CGFCHEKHLQCDVGRPCQNCRKRNIASFC. Basic residues predominate over residues 51 to 60; the sequence is KVKRRRKRKR. Disordered regions lie at residues 51–131 and 228–270; these read KVKR…AMKD and YISL…WQQQ. Positions 61 to 71 are enriched in basic and acidic residues; that stretch reads SDASNFDKDEA. Positions 72–92 are enriched in polar residues; it reads ATQTLNFNTVNPGEGSSSAMT. The span at 98-110 shows a compositional bias: low complexity; that stretch reads TGTTTATTTRTTT. Polar residues predominate over residues 111–125; that stretch reads NFRSESKASSSTENI. The span at 257–270 shows a compositional bias: low complexity; sequence QQKESQQMQLWQQQ. The region spanning 416–486 is the PAS domain; sequence ELENMSKLVN…DLFHEHLAFG (71 aa).

This sequence belongs to the ERT1/acuK family.

The protein localises to the nucleus. Functionally, transcription factor which regulates nonfermentable carbon utilization. The sequence is that of Glucose starvation modulator protein 1 (GSM1) from Zygosaccharomyces rouxii (strain ATCC 2623 / CBS 732 / NBRC 1130 / NCYC 568 / NRRL Y-229).